Here is an 83-residue protein sequence, read N- to C-terminus: Protein FAM240A (83 aa).

The protein belongs to the FAM240 family.

In Homo sapiens (Human), this protein is Protein FAM240A.